Here is a 669-residue protein sequence, read N- to C-terminus: GTP-binding protein 1 (669 aa).

Positions 1 to 32 (MATERSRSAMDSPVPASMFAPEPSSPGAARAA) are disordered. A phosphoserine mark is found at Ser6, Ser8, Ser12, Ser24, Ser25, Ser44, Ser47, and Ser69. A tr-type G domain is found at 158–389 (FLEVRVAVVG…LNLLSPRTSY (232 aa)). The segment at 167–174 (GNVDAGKS) is G1. Position 167–174 (167–174 (GNVDAGKS)) interacts with GTP. The tract at residues 206 to 210 (GRTSS) is G2. The segment at 252 to 255 (DLAG) is G3. Residues 252–256 (DLAGH) and 308–311 (TKID) contribute to the GTP site. Residues 308–311 (TKID) form a G4 region. Residues 366–368 (SNV) form a G5 region. Residues 573 to 595 (LLQTTNNSPMNSKPQQIKMQSTK) show a composition bias toward polar residues. The segment at 573 to 669 (LLQTTNNSPM…GACVTPASGC (97 aa)) is disordered. At Ser580 the chain carries Phosphoserine. The span at 646-657 (GRRRGGQRHKVK) shows a compositional bias: basic residues.

This sequence belongs to the TRAFAC class translation factor GTPase superfamily. Classic translation factor GTPase family. GTPBP1 subfamily. In terms of assembly, interacts with EXOSC2/RRP4, EXOSC3/RRP40, EXOSC5/RRP46, HNRNPD, HNRNPR and SYNCRIP. Identified in a complex with AANAT mRNA, but does not bind mRNA by itself.

The protein localises to the cytoplasm. Its function is as follows. Promotes degradation of target mRNA species. Plays a role in the regulation of circadian mRNA stability. Binds GTP and has GTPase activity. This chain is GTP-binding protein 1 (GTPBP1), found in Homo sapiens (Human).